The chain runs to 280 residues: Diaminopimelate epimerase (280 aa).

Positions 13 and 67 each coordinate substrate. Catalysis depends on cysteine 76, which acts as the Proton donor. Substrate-binding positions include 77 to 78 (GN), asparagine 191, and 208 to 209 (ER). The active-site Proton acceptor is cysteine 218. 219–220 (GT) contributes to the substrate binding site.

This sequence belongs to the diaminopimelate epimerase family. As to quaternary structure, homodimer.

The protein resides in the cytoplasm. The enzyme catalyses (2S,6S)-2,6-diaminopimelate = meso-2,6-diaminopimelate. It functions in the pathway amino-acid biosynthesis; L-lysine biosynthesis via DAP pathway; DL-2,6-diaminopimelate from LL-2,6-diaminopimelate: step 1/1. Functionally, catalyzes the stereoinversion of LL-2,6-diaminopimelate (L,L-DAP) to meso-diaminopimelate (meso-DAP), a precursor of L-lysine. This chain is Diaminopimelate epimerase, found in Archaeoglobus fulgidus (strain ATCC 49558 / DSM 4304 / JCM 9628 / NBRC 100126 / VC-16).